We begin with the raw amino-acid sequence, 721 residues long: Polyribonucleotide nucleotidyltransferase (721 aa).

The Mg(2+) site is built by Asp495 and Asp501. Residues Pro562 to Ile621 enclose the KH domain. Residues Gly631–Lys699 form the S1 motif domain. Residues Lys699–Lys721 form a disordered region.

The protein belongs to the polyribonucleotide nucleotidyltransferase family. The cofactor is Mg(2+).

Its subcellular location is the cytoplasm. It carries out the reaction RNA(n+1) + phosphate = RNA(n) + a ribonucleoside 5'-diphosphate. Its function is as follows. Involved in mRNA degradation. Catalyzes the phosphorolysis of single-stranded polyribonucleotides processively in the 3'- to 5'-direction. The polypeptide is Polyribonucleotide nucleotidyltransferase (Anaeromyxobacter sp. (strain K)).